A 633-amino-acid chain; its full sequence is Threonine--tRNA ligase (633 aa).

A TGS domain is found at 1–61 (MINIYFNNNL…TENCTFEVIT (61 aa)). Residues 242 to 533 (DHRKIGKELE…LIEHHSGKFP (292 aa)) form a catalytic region. Zn(2+) contacts are provided by Cys-333, His-384, and His-510.

It belongs to the class-II aminoacyl-tRNA synthetase family. As to quaternary structure, homodimer. The cofactor is Zn(2+).

The protein localises to the cytoplasm. The catalysed reaction is tRNA(Thr) + L-threonine + ATP = L-threonyl-tRNA(Thr) + AMP + diphosphate + H(+). In terms of biological role, catalyzes the attachment of threonine to tRNA(Thr) in a two-step reaction: L-threonine is first activated by ATP to form Thr-AMP and then transferred to the acceptor end of tRNA(Thr). Also edits incorrectly charged L-seryl-tRNA(Thr). The polypeptide is Threonine--tRNA ligase (Ehrlichia canis (strain Jake)).